Reading from the N-terminus, the 432-residue chain is Glutamate-1-semialdehyde 2,1-aminomutase (432 aa).

K272 carries the N6-(pyridoxal phosphate)lysine modification.

Belongs to the class-III pyridoxal-phosphate-dependent aminotransferase family. HemL subfamily. In terms of assembly, homodimer. Pyridoxal 5'-phosphate is required as a cofactor.

It localises to the cytoplasm. It catalyses the reaction (S)-4-amino-5-oxopentanoate = 5-aminolevulinate. Its pathway is porphyrin-containing compound metabolism; protoporphyrin-IX biosynthesis; 5-aminolevulinate from L-glutamyl-tRNA(Glu): step 2/2. It participates in porphyrin-containing compound metabolism; chlorophyll biosynthesis. This Trichodesmium erythraeum (strain IMS101) protein is Glutamate-1-semialdehyde 2,1-aminomutase.